The chain runs to 264 residues: Anamorsin homolog 2 (264 aa).

An N-terminal SAM-like domain region spans residues 1 to 142 (MAATAAALAV…KVSWSMGSSF (142 aa)). A linker region spans residues 143–174 (PLKKATKGLPKIQIDDDSELIDEDSLLTEDDL). Positions 185, 194, 197, and 199 each coordinate [2Fe-2S] cluster. The tract at residues 185–199 (CEVGATRKACKNCTC) is fe-S binding site A. C225, C228, C236, and C239 together coordinate [4Fe-4S] cluster. 2 consecutive short sequence motifs (cx2C motif) follow at residues 225-228 (CGNC) and 236-239 (CGTC). Residues 225–239 (CGNCGLGDAFRCGTC) are fe-S binding site B.

It belongs to the anamorsin family. As to quaternary structure, monomer. Requires [2Fe-2S] cluster as cofactor. The cofactor is [4Fe-4S] cluster.

The protein localises to the cytoplasm. It is found in the mitochondrion intermembrane space. In terms of biological role, component of the cytosolic iron-sulfur (Fe-S) protein assembly (CIA) machinery. Required for the maturation of extramitochondrial Fe-S proteins. Part of an electron transfer chain functioning in an early step of cytosolic Fe-S biogenesis, facilitating the de novo assembly of a [4Fe-4S] cluster on the cytosolic Fe-S scaffold complex. Electrons are transferred from NADPH via a FAD- and FMN-containing diflavin oxidoreductase. Together with the diflavin oxidoreductase, also required for the assembly of the diferric tyrosyl radical cofactor of ribonucleotide reductase (RNR), probably by providing electrons for reduction during radical cofactor maturation in the catalytic small subunit. The sequence is that of Anamorsin homolog 2 from Oryza sativa subsp. japonica (Rice).